The chain runs to 263 residues: 3-deoxy-manno-octulosonate cytidylyltransferase 1 (263 aa).

It belongs to the KdsB family.

The protein localises to the cytoplasm. It carries out the reaction 3-deoxy-alpha-D-manno-oct-2-ulosonate + CTP = CMP-3-deoxy-beta-D-manno-octulosonate + diphosphate. It functions in the pathway nucleotide-sugar biosynthesis; CMP-3-deoxy-D-manno-octulosonate biosynthesis; CMP-3-deoxy-D-manno-octulosonate from 3-deoxy-D-manno-octulosonate and CTP: step 1/1. The protein operates within bacterial outer membrane biogenesis; lipopolysaccharide biosynthesis. Functionally, activates KDO (a required 8-carbon sugar) for incorporation into bacterial lipopolysaccharide in Gram-negative bacteria. The chain is 3-deoxy-manno-octulosonate cytidylyltransferase 1 from Burkholderia ambifaria (strain ATCC BAA-244 / DSM 16087 / CCUG 44356 / LMG 19182 / AMMD) (Burkholderia cepacia (strain AMMD)).